Consider the following 932-residue polypeptide: DNA mismatch repair protein MutS (932 aa).

615-622 contacts ATP; it reads GPNMAGKS.

This sequence belongs to the DNA mismatch repair MutS family.

Its function is as follows. This protein is involved in the repair of mismatches in DNA. It is possible that it carries out the mismatch recognition step. This protein has a weak ATPase activity. This Clostridium botulinum (strain Kyoto / Type A2) protein is DNA mismatch repair protein MutS.